Here is a 372-residue protein sequence, read N- to C-terminus: MRFERLAQDGQARRGRLSFPRGTVETPAFMPVGTYGTVKGMTPQSVKDIGAEIILGNTFHLWLRPGTEVIETHGDLHDFAQWDKPILTDSGGFQVFSLGDMRKITEEGVHFRSPVDGAKVFMGPEESMAVQRSLGSDIVMIFDECTPYPATEAEAKRSMEMSLRWAERSRIAHGDSPSALFGIIQGGMYPELRERSLKGLLDIGFDGLAIGGLSVGEPKEEMLKVLDYLPGWMPDDKPRYLMGVGKPEDLVEGVRRGVDMFDCVMPTRNARNGYLFTAEGTVKIRNAQHRYSTQALEADCDCHTCQHFSRSYLHHLDRCGEMLGAMLNTIHNLRYYQRVMAGLRTAIEAGTLTAFVEDFYARRGMPVPPLAA.

Catalysis depends on D89, which acts as the Proton acceptor. Residues 89 to 93, D143, Q185, and G212 contribute to the substrate site; that span reads DSGGF. Positions 243-249 are RNA binding; it reads GVGKPED. D262 (nucleophile) is an active-site residue. Residues 267-271 form an RNA binding; important for wobble base 34 recognition region; sequence TRNAR. Residues C300, C302, C305, and H331 each contribute to the Zn(2+) site.

It belongs to the queuine tRNA-ribosyltransferase family. Homodimer. Within each dimer, one monomer is responsible for RNA recognition and catalysis, while the other monomer binds to the replacement base PreQ1. The cofactor is Zn(2+).

The enzyme catalyses 7-aminomethyl-7-carbaguanine + guanosine(34) in tRNA = 7-aminomethyl-7-carbaguanosine(34) in tRNA + guanine. Its pathway is tRNA modification; tRNA-queuosine biosynthesis. Its function is as follows. Catalyzes the base-exchange of a guanine (G) residue with the queuine precursor 7-aminomethyl-7-deazaguanine (PreQ1) at position 34 (anticodon wobble position) in tRNAs with GU(N) anticodons (tRNA-Asp, -Asn, -His and -Tyr). Catalysis occurs through a double-displacement mechanism. The nucleophile active site attacks the C1' of nucleotide 34 to detach the guanine base from the RNA, forming a covalent enzyme-RNA intermediate. The proton acceptor active site deprotonates the incoming PreQ1, allowing a nucleophilic attack on the C1' of the ribose to form the product. After dissociation, two additional enzymatic reactions on the tRNA convert PreQ1 to queuine (Q), resulting in the hypermodified nucleoside queuosine (7-(((4,5-cis-dihydroxy-2-cyclopenten-1-yl)amino)methyl)-7-deazaguanosine). In Chromohalobacter salexigens (strain ATCC BAA-138 / DSM 3043 / CIP 106854 / NCIMB 13768 / 1H11), this protein is Queuine tRNA-ribosyltransferase.